Reading from the N-terminus, the 589-residue chain is MSLRFNLIVTPFSNHRIRNRRETFPAQEFPVATSKSAVKVKCNLITSTDLVGKVREKINGKVDNSLEVPAIHPVDIPSNLCMIDTLERLGVDRYFQSEIDGVLEETYRLWQQKEKDIFADVTCRAMAFRLLRVKGYEVSSDELAPYADQAHVNLQISDVTAVIELYRASQERIYEEESTLEKLHAWTSTYLKQQLVSGTISDKKLHKQVEYYLKNYHGILDLVGIRRSLDLYDIDHYQILKAADRFRTICKDLLAFSRQDFNNCQAQYQRELQLLQRWYEDCRLDKLNYGRDVLRISYFVSSAIIGDPELSDARLAFAKYCVLTTCIDDFFDHAGSREESYRILELVKEWKEKPAEDYGSKEVEFLFTAVYNTVNELAEMAYVEQGRCVKSLLIKLWVELLTSFKKELDSWTDDTALSLDEYLSSSWVSITSRINILTSIQFLGLKLSEEMLSSQECTDLCRHGSLVVRLLNDMQTFEKERRENTKNSVSILLEAPKHEGAITEEEVISKIKEIVEQNRRKLMQMVYQRGTIFPRKCKDVFLKSCRGGYYLYSNGDEFTSPVQIMEDMKLCYEPLTFHPLEANNGGNKN.

Mg(2+)-binding residues include D328, D332, N472, T476, and E480. The short motif at 328-332 (DDFFD) is the DDXXD motif element.

This sequence belongs to the terpene synthase family. Requires Mg(2+) as cofactor. Mostly expressed in trichomes of leaves and fruits.

It localises to the plastid. It is found in the chloroplast. It carries out the reaction 9alpha-copalyl diphosphate + H2O = (13S)-vitexifolin A + diphosphate. The catalysed reaction is peregrinol diphosphate = (13R)-9,13-epoxylabd-14-ene + diphosphate. The enzyme catalyses peregrinol diphosphate + H2O = viteagnusin D + diphosphate. It functions in the pathway secondary metabolite biosynthesis; terpenoid biosynthesis. Involved in the biosynthesis of labdane-type diterpenoid including cleroda-dienols, and peregrinol lactones and furan derivatives, dopaminergic diterpenoids that can bind to dopamine receptors in the human pituitary gland, have probably ability to lower prolactin levels, and are used to treat menstrual cycle disorders (e.g. premenstrual syndrome and mastodynia). Terpene synthase the catalyzes the conversion of peregrinol diphosphate to viteagnusin D and 9,13(R)-epoxy-labd-14-ene, and of syn-copalyl diphosophate to vitexifolin A. The polypeptide is Class I diterpene synthase 2, chloroplastic (Vitex agnus-castus (Chaste tree)).